The chain runs to 77 residues: Conotoxin PnMKLT1-0122 (77 aa).

The signal sequence occupies residues 1 to 22 (MKLTCMMIVAVLFLTAWTFATA). The propeptide occupies 23–49 (EDPRNGLENLFSKAHHEMKNPEDSKLN). 3 cysteine pairs are disulfide-bonded: Cys-52/Cys-67, Cys-59/Cys-71, and Cys-66/Cys-76.

It belongs to the conotoxin O1 superfamily. Expressed by the venom duct.

The protein localises to the secreted. This Conus pennaceus (Feathered cone) protein is Conotoxin PnMKLT1-0122.